The primary structure comprises 173 residues: uncharacterized protein (173 aa).

This is an uncharacterized protein from Bacillus subtilis (strain 168).